A 192-amino-acid polypeptide reads, in one-letter code: E3 ubiquitin-protein ligase RNF185 (192 aa).

Polar residues predominate over residues 1 to 13 (MASKGPSASASTE). Residues 1–30 (MASKGPSASASTENSNAGGPSGSSNGTGES) are disordered. Over 1-130 (MASKGPSASA…GGFQGFGFGD (130 aa)) the chain is Cytoplasmic. The segment covering 14 to 27 (NSNAGGPSGSSNGT) has biased composition (low complexity). The required for ubiquitin ligase activity and protection against ER stress-induced cell death stretch occupies residues 29-80 (ESGGQDSTFECNICLDTAKDAVISLCGHLFCWPCLHQWLETRPNRQVCPVCK). An RING-type zinc finger spans residues 39–80 (CNICLDTAKDAVISLCGHLFCWPCLHQWLETRPNRQVCPVCK). Residues 90–123 (PLYGRGSTGQQDPREKTPPRPQGQRPEPENRGGF) are disordered. Residues 131–151 (GGFQMSFGIGAFPFGIFATAF) form a helical membrane-spanning segment. The Mitochondrial intermembrane portion of the chain corresponds to 152 to 171 (NINDGRPPPAVPGTPQYVDE). The chain crosses the membrane as a helical span at residues 172–192 (QFLSRLFLFVALVIMFWLLIA).

Interacts with ATG5 and BNIP1. As to expression, ubiquitously expressed with high expression in testis.

The protein localises to the mitochondrion outer membrane. The protein resides in the endoplasmic reticulum membrane. The catalysed reaction is S-ubiquitinyl-[E2 ubiquitin-conjugating enzyme]-L-cysteine + [acceptor protein]-L-lysine = [E2 ubiquitin-conjugating enzyme]-L-cysteine + N(6)-ubiquitinyl-[acceptor protein]-L-lysine.. The protein operates within protein modification; protein ubiquitination. Functionally, E3 ubiquitin-protein ligase that regulates selective mitochondrial autophagy by mediating 'Lys-63'-linked polyubiquitination of BNIP1. Acts in the endoplasmic reticulum (ER)-associated degradation (ERAD) pathway, which targets misfolded proteins that accumulate in the endoplasmic reticulum (ER) for ubiquitination and subsequent proteasome-mediated degradation. Protects cells from ER stress-induced apoptosis. Responsible for the cotranslational ubiquitination and degradation of CFTR in the ERAD pathway. Also acts as a regulator of the innate antiviral response by catalyzing 'Lys-27'-linked polyubiquitination of CGAS, thereby promoting CGAS cyclic GMP-AMP synthase activity. Preferentially associates with the E2 enzymes UBE2J1 and UBE2J2. The protein is E3 ubiquitin-protein ligase RNF185 (Rnf185) of Mus musculus (Mouse).